Consider the following 84-residue polypeptide: Toxin CsE9 (84 aa).

A signal peptide spans 1-19; sequence MNSLLMITTCLILIGTVLA. The LCN-type CS-alpha/beta domain occupies 20 to 83; it reads EDGYLFDKRK…ISRTPGKTCK (64 aa). Intrachain disulfides connect Cys-31–Cys-82, Cys-35–Cys-58, Cys-44–Cys-63, and Cys-48–Cys-65.

The protein belongs to the long (4 C-C) scorpion toxin superfamily. Sodium channel inhibitor family. Beta subfamily. Expressed by the venom gland.

It is found in the secreted. Its function is as follows. Beta toxins bind voltage-independently at site-4 of sodium channels (Nav) and shift the voltage of activation toward more negative potentials thereby affecting sodium channel activation and promoting spontaneous and repetitive firing. This is Toxin CsE9 from Centruroides sculpturatus (Arizona bark scorpion).